The following is a 73-amino-acid chain: Small ribosomal subunit protein bS18B (73 aa).

Belongs to the bacterial ribosomal protein bS18 family. Part of the 30S ribosomal subunit. Forms a tight heterodimer with protein bS6.

Its function is as follows. Binds as a heterodimer with protein bS6 to the central domain of the 16S rRNA, where it helps stabilize the platform of the 30S subunit. The polypeptide is Small ribosomal subunit protein bS18B (Frankia alni (strain DSM 45986 / CECT 9034 / ACN14a)).